The primary structure comprises 457 residues: Protein PIN-LIKES 2 (457 aa).

The Lumenal segment spans residues 1 to 15 (MSGFSSGNVNSRVVD). A helical transmembrane segment spans residues 16–36 (ILSGVVPLLKLICLTVIGLLL). Residues 37 to 54 (AHPKTQLVPRATFRLLSK) lie on the Cytoplasmic side of the membrane. Residues 55 to 75 (LVFALFLPCLIFTELGESITL) form a helical membrane-spanning segment. Topologically, residues 76–85 (DNIVQWWFIP) are lumenal. A helical transmembrane segment spans residues 86–106 (VNVLLSAVVGSLIGYLVVLIC). Residues 107–116 (RPPPEFNRFT) are Cytoplasmic-facing. Residues 117 to 137 (IVMTAFGNTGNLLLAIVSSVC) form a helical membrane-spanning segment. Topologically, residues 138-151 (HTKTNPFGPNCNSR) are lumenal. The chain crosses the membrane as a helical span at residues 152–172 (GVSYVSFAQWVAVILVYTVVY). Over 173–291 (HMMEPPLEYY…PVKHILQPPT (119 aa)) the chain is Cytoplasmic. The chain crosses the membrane as a helical span at residues 292 to 312 (IASLLAIIIGSVPQLKSVVFG). Residues 313–322 (YDAPLSFITD) are Lumenal-facing. The chain crosses the membrane as a helical span at residues 323-343 (SLNIMGSAMVPSVMLVLGGML). Topologically, residues 344–356 (SEGPNESTLGLRT) are cytoplasmic. The chain crosses the membrane as a helical span at residues 357 to 377 (TIGISVARLLVLPLVGIGIVM). Over 378-393 (SADKLGLISSADPMFK) the chain is Lumenal. A helical transmembrane segment spans residues 394–414 (FVLLLQYSTPSAILLGAIASL). Topologically, residues 415 to 424 (RGYAVREASA) are cytoplasmic. The helical transmembrane segment at 425–445 (LLFWQHIFALLSLTFYIVIFF) threads the bilayer. The Lumenal portion of the chain corresponds to 446 to 457 (KLTVETTVQGMQ).

The protein belongs to the auxin efflux carrier (TC 2.A.69.2) family. Expressed in seedlings, rosette and cauline leaves, flowers and siliques.

The protein resides in the endoplasmic reticulum membrane. Its function is as follows. Involved in cellular auxin homeostasis by regulating auxin metabolism. Regulates intracellular auxin accumulation at the endoplasmic reticulum and thus auxin availability for nuclear auxin signaling. This is Protein PIN-LIKES 2 from Arabidopsis thaliana (Mouse-ear cress).